The sequence spans 419 residues: F-box/LRR-repeat protein At1g67190 (419 aa).

The F-box domain occupies 1–48; sequence MDYLPVEVIGNILSRLGGARDVVIASATCRKWREACRKHLQTLSFNSA. LRR repeat units lie at residues 53-82, 96-124, 133-157, 158-183, 185-209, 245-272, 273-297, 301-326, and 356-381; these read YRDLTTNRLEILITQTIFQTMGLQGLSIMM, WLMYTRDTLRRLSYNVRTTPNVNILEICG, LAHNSITGVEPSFQRFPCLKSLSLS, YVSISALDLNLLLSACPMIESLELVS, EIAMSDAQVTIELSSPTLKSVYFDG, HFKLDDVSVIHLDIMETSESLEVVDVNH, FTMVWPKFYQMISRSQKLKKLRLWD, DDDDEIIDVESIAAGFSHLTHLSLSY, and INDVFSIWVEELLRRCPNLKKLIIYG.

This chain is F-box/LRR-repeat protein At1g67190, found in Arabidopsis thaliana (Mouse-ear cress).